Consider the following 624-residue polypeptide: tRNA uridine 5-carboxymethylaminomethyl modification enzyme MnmG (624 aa).

FAD contacts are provided by residues 13–18, valine 125, and serine 180; that span reads GGGHAG. NAD(+) is bound at residue 273 to 287; that stretch reads GPRYCPSIEDKIVRF. An FAD-binding site is contributed by glutamine 370.

This sequence belongs to the MnmG family. Homodimer. Heterotetramer of two MnmE and two MnmG subunits. It depends on FAD as a cofactor.

It localises to the cytoplasm. Its function is as follows. NAD-binding protein involved in the addition of a carboxymethylaminomethyl (cmnm) group at the wobble position (U34) of certain tRNAs, forming tRNA-cmnm(5)s(2)U34. This Legionella pneumophila subsp. pneumophila (strain Philadelphia 1 / ATCC 33152 / DSM 7513) protein is tRNA uridine 5-carboxymethylaminomethyl modification enzyme MnmG.